The primary structure comprises 660 residues: Bifunctional polymyxin resistance protein ArnA (660 aa).

The formyltransferase ArnAFT stretch occupies residues M1–L304. A (6R)-10-formyltetrahydrofolate-binding site is contributed by H86–I88. H104 acts as the Proton donor; for formyltransferase activity in catalysis. (6R)-10-formyltetrahydrofolate is bound by residues R114 and V136–D140. The tract at residues R314–S660 is dehydrogenase ArnADH. NAD(+) is bound by residues D347 and D368 to I369. UDP-alpha-D-glucuronate is bound by residues A393, Y398, and T432–S433. The active-site Proton acceptor; for decarboxylase activity is the E434. UDP-alpha-D-glucuronate contacts are provided by residues R460, N492, K526–R535, and Y613. Catalysis depends on R619, which acts as the Proton donor; for decarboxylase activity.

This sequence in the N-terminal section; belongs to the Fmt family. UDP-L-Ara4N formyltransferase subfamily. It in the C-terminal section; belongs to the NAD(P)-dependent epimerase/dehydratase family. UDP-glucuronic acid decarboxylase subfamily. As to quaternary structure, homohexamer, formed by a dimer of trimers.

It catalyses the reaction UDP-alpha-D-glucuronate + NAD(+) = UDP-beta-L-threo-pentopyranos-4-ulose + CO2 + NADH. The catalysed reaction is UDP-4-amino-4-deoxy-beta-L-arabinose + (6R)-10-formyltetrahydrofolate = UDP-4-deoxy-4-formamido-beta-L-arabinose + (6S)-5,6,7,8-tetrahydrofolate + H(+). It participates in nucleotide-sugar biosynthesis; UDP-4-deoxy-4-formamido-beta-L-arabinose biosynthesis; UDP-4-deoxy-4-formamido-beta-L-arabinose from UDP-alpha-D-glucuronate: step 1/3. The protein operates within nucleotide-sugar biosynthesis; UDP-4-deoxy-4-formamido-beta-L-arabinose biosynthesis; UDP-4-deoxy-4-formamido-beta-L-arabinose from UDP-alpha-D-glucuronate: step 3/3. It functions in the pathway bacterial outer membrane biogenesis; lipopolysaccharide biosynthesis. Functionally, bifunctional enzyme that catalyzes the oxidative decarboxylation of UDP-glucuronic acid (UDP-GlcUA) to UDP-4-keto-arabinose (UDP-Ara4O) and the addition of a formyl group to UDP-4-amino-4-deoxy-L-arabinose (UDP-L-Ara4N) to form UDP-L-4-formamido-arabinose (UDP-L-Ara4FN). The modified arabinose is attached to lipid A and is required for resistance to polymyxin and cationic antimicrobial peptides. This is Bifunctional polymyxin resistance protein ArnA from Shigella sonnei (strain Ss046).